We begin with the raw amino-acid sequence, 442 residues long: Probable glycine dehydrogenase (decarboxylating) subunit 1 (442 aa).

Belongs to the GcvP family. N-terminal subunit subfamily. In terms of assembly, the glycine cleavage system is composed of four proteins: P, T, L and H. In this organism, the P 'protein' is a heterodimer of two subunits.

It catalyses the reaction N(6)-[(R)-lipoyl]-L-lysyl-[glycine-cleavage complex H protein] + glycine + H(+) = N(6)-[(R)-S(8)-aminomethyldihydrolipoyl]-L-lysyl-[glycine-cleavage complex H protein] + CO2. Its function is as follows. The glycine cleavage system catalyzes the degradation of glycine. The P protein binds the alpha-amino group of glycine through its pyridoxal phosphate cofactor; CO(2) is released and the remaining methylamine moiety is then transferred to the lipoamide cofactor of the H protein. This Phenylobacterium zucineum (strain HLK1) protein is Probable glycine dehydrogenase (decarboxylating) subunit 1.